We begin with the raw amino-acid sequence, 113 residues long: CRISPR-associated endoribonuclease Cas2 (113 aa).

Residue Asp33 participates in Mg(2+) binding.

The protein belongs to the CRISPR-associated endoribonuclease Cas2 protein family. As to quaternary structure, homodimer, forms a heterotetramer with a Cas1 homodimer. Requires Mg(2+) as cofactor.

Functionally, CRISPR (clustered regularly interspaced short palindromic repeat), is an adaptive immune system that provides protection against mobile genetic elements (viruses, transposable elements and conjugative plasmids). CRISPR clusters contain sequences complementary to antecedent mobile elements and target invading nucleic acids. CRISPR clusters are transcribed and processed into CRISPR RNA (crRNA). Functions as a ssRNA-specific endoribonuclease. Involved in the integration of spacer DNA into the CRISPR cassette. The type III-A Csm effector complex binds crRNA and acts as a crRNA-guided RNase, DNase and cyclic oligoadenylate synthase; binding of target RNA cognate to the crRNA is required for all activities. The polypeptide is CRISPR-associated endoribonuclease Cas2 (Mycobacterium tuberculosis (strain CDC 1551 / Oshkosh)).